We begin with the raw amino-acid sequence, 358 residues long: Protein SRG1 (358 aa).

A Fe2OG dioxygenase domain is found at 209-309 (SVQSMRMNYY…RLSIATFHNV (101 aa)). Positions 233, 235, and 290 each coordinate Fe cation.

This sequence belongs to the iron/ascorbate-dependent oxidoreductase family. Low expression in roots and leaves.

This is Protein SRG1 (SRG1) from Arabidopsis thaliana (Mouse-ear cress).